The chain runs to 141 residues: Large ribosomal subunit protein uL11 (141 aa).

This sequence belongs to the universal ribosomal protein uL11 family. As to quaternary structure, part of the ribosomal stalk of the 50S ribosomal subunit. Interacts with L10 and the large rRNA to form the base of the stalk. L10 forms an elongated spine to which L12 dimers bind in a sequential fashion forming a multimeric L10(L12)X complex. One or more lysine residues are methylated.

In terms of biological role, forms part of the ribosomal stalk which helps the ribosome interact with GTP-bound translation factors. The chain is Large ribosomal subunit protein uL11 from Agathobacter rectalis (strain ATCC 33656 / DSM 3377 / JCM 17463 / KCTC 5835 / VPI 0990) (Eubacterium rectale).